A 295-amino-acid polypeptide reads, in one-letter code: Biliverdin reductase A (295 aa).

Residues 1–2 constitute a propeptide that is removed on maturation; sequence MS. Residues 18–19, 76–79, and tyrosine 97 each bind NAD(+); these read RA and SSSH. Serine 154 is modified (phosphoserine). NAD(+) is bound at residue serine 167. The residue at position 173 (threonine 173) is a Phosphothreonine. Phosphoserine is present on residues serine 177 and serine 229. Residues lysine 247 and lysine 252 each carry the N6-acetyllysine modification. Zn(2+) contacts are provided by histidine 279, cysteine 280, cysteine 291, and histidine 292.

This sequence belongs to the Gfo/Idh/MocA family. Biliverdin reductase subfamily. In terms of assembly, monomer. It depends on Zn(2+) as a cofactor.

It is found in the cytoplasm. It localises to the cytosol. It carries out the reaction (4Z,15Z)-bilirubin IXalpha + NAD(+) = biliverdin IXalpha + NADH + H(+). The catalysed reaction is (4Z,15Z)-bilirubin IXalpha + NADP(+) = biliverdin IXalpha + NADPH + H(+). It functions in the pathway porphyrin-containing compound metabolism; protoheme degradation. Reduces the gamma-methene bridge of the open tetrapyrrole, biliverdin IXalpha, to bilirubin with the concomitant oxidation of a NADH or NADPH cofactor. Does not reduce bilirubin IXbeta. Uses the reactants NADH or NADPH depending on the pH; NADH is used at the acidic pH range (6-6.9) and NADPH at the alkaline range (8.5-8.7). NADPH, however, is the probable reactant in biological systems. The protein is Biliverdin reductase A of Mus musculus (Mouse).